An 811-amino-acid chain; its full sequence is MSKQCLLSCFLFFCFFIPQLSFSCPQDQRQSLLEFKNLLIHNIKDNYTAFEELGTWRPNSDCCKWLRVTCNASSPSKEVIDLNLFLLIPPGLVSSSILRPILRINSLVGLDVSFNNIQGEIPGYAFVNLTSLISLDMCCNRFNGSIPHELFSLTNLQRLDLSRNVIGGTLSGDIKELKNLQELILDENLIGGAIPSEIGSLVELLTLTLRQNMFNSSIPSSVSRLTKLKTIDLQNNFLSSKIPDDIGNLVNLSTLSLSMNKLSGGIPSSIHNLKNLETLQLENNNGLSGEIPAAWLFGLQKLKVLRLEGNNKLQWNNNGYVFPQFKLTHLSLRSCGLEGNIPDWLKNQTALVYLDLSINRLEGRFPKWLADLKIRNITLSDNRLTGSLPPNLFQRPSLYYLVLSRNNFSGQIPDTIGESQVMVLMLSENNFSGSVPKSITKIPFLKLLDLSKNRLSGEFPRFRPESYLEWLDISSNEFSGDVPAYFGGSTSMLLMSQNNFSGEFPQNFRNLSYLIRLDLHDNKISGTVASLISQLSSSVEVLSLRNNSLKGSIPEGISNLTSLKVLDLSENNLDGYLPSSLGNLTCMIKSPEPSAMTIRPYFSSYTDIPNIERLIEIESEDIFSLVVNWKNSKQVLFDRNFYLYTLLDLSKNKLHGEIPTSLGNLKSLKVLNLSNNEFSGLIPQSFGDLEKVESLDLSHNNLTGEIPKTLSKLSELNTLDLRNNKLKGRIPESPQLDRLNNPNIYANNSGICGMQIQVPCFPTQTKQPAEEKEEEDKEEEETIFSWNAAAIGCSCGFLIAVVFMSYNELWK.

Residues 1 to 21 form the signal peptide; the sequence is MSKQCLLSCFLFFCFFIPQLS. The Extracellular portion of the chain corresponds to 22 to 782; it reads FSCPQDQRQS…EEEDKEEEET (761 aa). N-linked (GlcNAc...) asparagine glycosylation is found at asparagine 46, asparagine 71, asparagine 128, and asparagine 143. LRR repeat units lie at residues 104–128, 129–153, 155–177, 178–201, 203–225, 226–249, 251–273, 275–298, 299–322, 324–348, 349–369, 370–395, 397–419, 421–442, 443–466, 468–488, 490–510, 511–534, 536–560, 561–583, 643–665, 666–688, 690–713, and 714–738; these read INSLVGLDVSFNNIQGEIPGYAFVN, LTSLISLDMCCNRFNGSIPHELFSL, NLQRLDLSRNVIGGTLSGDIKEL, KNLQELILDENLIGGAIPSEIGSL, ELLTLTLRQNMFNSSIPSSVSRL, TKLKTIDLQNNFLSSKIPDDIGNL, NLSTLSLSMNKLSGGIPSSIHNL, NLETLQLENNNGLSGEIPAAWLFG, LQKLKVLRLEGNNKLQWNNNGYVF, QFKLTHLSLRSCGLEGNIPDWLKNQ, TALVYLDLSINRLEGRFPKWL, ADLKIRNITLSDNRLTGSLPPNLFQR, SLYYLVLSRNNFSGQIPDTIGES, VMVLMLSENNFSGSVPKSITKI, PFLKLLDLSKNRLSGEFPRFRPES, LEWLDISSNEFSGDVPAYFGG, TSMLLMSQNNFSGEFPQNFRN, LSYLIRLDLHDNKISGTVASLISQ, SSSVEVLSLRNNSLKGSIPEGISNL, TSLKVLDLSENNLDGYLPSSLGN, LYTLLDLSKNKLHGEIPTSLGNL, KSLKVLNLSNNEFSGLIPQSFGD, EKVESLDLSHNNLTGEIPKTLSKL, and SELNTLDLRNNKLKGRIPESPQLDR. The N-linked (GlcNAc...) asparagine glycan is linked to asparagine 215. Asparagine 251 is a glycosylation site (N-linked (GlcNAc...) asparagine). Residue asparagine 347 is glycosylated (N-linked (GlcNAc...) asparagine). N-linked (GlcNAc...) asparagine glycans are attached at residues asparagine 376, asparagine 407, and asparagine 430. Residues asparagine 499 and asparagine 510 are each glycosylated (N-linked (GlcNAc...) asparagine). Asparagine 546, asparagine 559, and asparagine 583 each carry an N-linked (GlcNAc...) asparagine glycan. N-linked (GlcNAc...) asparagine glycans are attached at residues asparagine 672 and asparagine 701. N-linked (GlcNAc...) asparagine glycosylation occurs at asparagine 747. The chain crosses the membrane as a helical span at residues 783–803; that stretch reads IFSWNAAAIGCSCGFLIAVVF. The Cytoplasmic segment spans residues 804–811; the sequence is MSYNELWK.

It belongs to the RLP family.

Its subcellular location is the cell membrane. This is Receptor-like protein 46 from Arabidopsis thaliana (Mouse-ear cress).